We begin with the raw amino-acid sequence, 220 residues long: Small ribosomal subunit protein uS3 (220 aa).

The region spanning Ile38–Lys106 is the KH type-2 domain.

The protein belongs to the universal ribosomal protein uS3 family. Part of the 30S ribosomal subunit. Forms a tight complex with proteins S10 and S14.

Its function is as follows. Binds the lower part of the 30S subunit head. Binds mRNA in the 70S ribosome, positioning it for translation. The protein is Small ribosomal subunit protein uS3 of Brevibacillus brevis (strain 47 / JCM 6285 / NBRC 100599).